Reading from the N-terminus, the 271-residue chain is MTEVRRRGRPGQAEPVAQKGAQALERGIAILQYLEKSGGSSSVSDISLNLDLPLSTTFRLLKVLQAADFVYQDSQLGWWHIGLGVFNVGAAYIHNRDVLSVAGPFMRRLMLLSGETVNVAIRNGNEAVLIGQLECKSMVRMCAPLGSRLPLHASGAGKALLYPLAEEELMSIILQTGLQQFTPTTLVDMPTLLKDLEQARELGYTVDKEEHVVGLNCIASAIYDDVGSVVAAISISGPSSRLTEDRFVSQGELVRDTARDISTALGLKAHP.

Residues 21 to 83 (AQALERGIAI…SQLGWWHIGL (63 aa)) enclose the HTH iclR-type domain. A DNA-binding region (H-T-H motif) is located at residues 43–62 (VSDISLNLDLPLSTTFRLLK). One can recognise an IclR-ED domain in the interval 98 to 267 (VLSVAGPFMR…ARDISTALGL (170 aa)). Residues 154–156 (SGA), D207, C217, and 234–236 (SIS) contribute to the glyoxylate site.

Functionally, negative regulator of allantoin and glyoxylate utilization operons. Binds to the gcl promoter and to the allS-allA intergenic region. This chain is HTH-type transcriptional repressor AllR (allR), found in Escherichia coli O6:H1 (strain CFT073 / ATCC 700928 / UPEC).